Consider the following 224-residue polypeptide: Mammalian ependymin-related protein 1 (224 aa).

The N-terminal stretch at 1–37 is a signal peptide; that stretch reads MLTRAPRRLVQGPRETWLLGGLWVWILCGLGMAGSPG. Intrachain disulfides connect cysteine 42–cysteine 172, cysteine 88–cysteine 222, and cysteine 113–cysteine 210. N-linked (GlcNAc...) asparagine glycosylation is found at asparagine 130 and asparagine 182.

This sequence belongs to the ependymin family. Homodimer. N-glycosylated; the glycan contains mannose-6-phosphate moieties. In terms of tissue distribution, detected in brain (at protein level).

The protein resides in the lysosome lumen. The protein localises to the secreted. Its function is as follows. Binds anionic lipids and gangliosides at acidic pH. In Rattus norvegicus (Rat), this protein is Mammalian ependymin-related protein 1 (Epdr1).